Here is a 523-residue protein sequence, read N- to C-terminus: 2-isopropylmalate synthase (523 aa).

Positions 5–267 (VIIFDTTLRD…HTNINHHEIW (263 aa)) constitute a Pyruvate carboxyltransferase domain. Mn(2+)-binding residues include Asp-14, His-202, His-204, and Asn-238. Positions 392–523 (RLDYFSVQSG…QNKENNKETV (132 aa)) are regulatory domain.

This sequence belongs to the alpha-IPM synthase/homocitrate synthase family. LeuA type 1 subfamily. In terms of assembly, homodimer. Mn(2+) is required as a cofactor.

It is found in the cytoplasm. It carries out the reaction 3-methyl-2-oxobutanoate + acetyl-CoA + H2O = (2S)-2-isopropylmalate + CoA + H(+). It participates in amino-acid biosynthesis; L-leucine biosynthesis; L-leucine from 3-methyl-2-oxobutanoate: step 1/4. In terms of biological role, catalyzes the condensation of the acetyl group of acetyl-CoA with 3-methyl-2-oxobutanoate (2-ketoisovalerate) to form 3-carboxy-3-hydroxy-4-methylpentanoate (2-isopropylmalate). The protein is 2-isopropylmalate synthase of Salmonella agona (strain SL483).